The chain runs to 94 residues: Putative testis-specific prion protein (94 aa).

The first 18 residues, 1 to 18, serve as a signal peptide directing secretion; that stretch reads MQHSLVFFFAVILHLSHL. N-linked (GlcNAc...) asparagine glycosylation occurs at N44.

As to expression, specifically expressed in adult testis.

Its subcellular location is the secreted. The chain is Putative testis-specific prion protein (PRNT) from Homo sapiens (Human).